Here is a 191-residue protein sequence, read N- to C-terminus: Thymidine kinase (191 aa).

Residues 9–16 (GSMNSGKT) and 85–88 (DESQ) contribute to the ATP site. The active-site Proton acceptor is Glu-86. Cys-143, Cys-146, Cys-181, and Cys-184 together coordinate Zn(2+).

Belongs to the thymidine kinase family. As to quaternary structure, homotetramer.

The protein resides in the cytoplasm. The enzyme catalyses thymidine + ATP = dTMP + ADP + H(+). The sequence is that of Thymidine kinase from Listeria monocytogenes serovar 1/2a (strain ATCC BAA-679 / EGD-e).